The sequence spans 129 residues: Small ribosomal subunit protein uS9 (129 aa).

The protein belongs to the universal ribosomal protein uS9 family.

In Treponema pallidum (strain Nichols), this protein is Small ribosomal subunit protein uS9 (rpsI).